The chain runs to 213 residues: Large ribosomal subunit protein uL18c (213 aa).

The protein belongs to the universal ribosomal protein uL18 family.

Its subcellular location is the plastid. The protein localises to the apicoplast. This is Large ribosomal subunit protein uL18c (RPL18) from Plasmodium falciparum (isolate 3D7).